Here is a 79-residue protein sequence, read N- to C-terminus: Sec-independent protein translocase protein TatA (79 aa).

Residues 1 to 21 (MGFSTTHLLIFLVIIIVIFGT) traverse the membrane as a helical segment. The tract at residues 43-63 (KEGSDKAADAPAAAPQQVASS) is disordered. Positions 51-63 (DAPAAAPQQVASS) are enriched in low complexity.

Belongs to the TatA/E family. As to quaternary structure, the Tat system comprises two distinct complexes: a TatABC complex, containing multiple copies of TatA, TatB and TatC subunits, and a separate TatA complex, containing only TatA subunits. Substrates initially bind to the TatABC complex, which probably triggers association of the separate TatA complex to form the active translocon.

The protein resides in the cell inner membrane. Part of the twin-arginine translocation (Tat) system that transports large folded proteins containing a characteristic twin-arginine motif in their signal peptide across membranes. TatA could form the protein-conducting channel of the Tat system. The polypeptide is Sec-independent protein translocase protein TatA (Albidiferax ferrireducens (strain ATCC BAA-621 / DSM 15236 / T118) (Rhodoferax ferrireducens)).